A 184-amino-acid chain; its full sequence is NEDD8-conjugating enzyme Ubc12 (184 aa).

Residues 30 to 175 (AGELRLHKDI…VRRAMTGGYV (146 aa)) enclose the UBC core domain. The active-site Glycyl thioester intermediate is Cys-113.

The protein belongs to the ubiquitin-conjugating enzyme family. UBC12 subfamily. In terms of assembly, interacts with RBX1. As to expression, expressed in shoot, root and floral meristems, and in vascular tissues of leaves.

It participates in protein modification; protein neddylation. Accepts the ubiquitin-like protein NEDD8/RUB1 from the ECR1-AXR1 E1 complex and catalyzes its covalent attachment to other proteins. This Arabidopsis thaliana (Mouse-ear cress) protein is NEDD8-conjugating enzyme Ubc12 (RCE1).